A 310-amino-acid polypeptide reads, in one-letter code: Tyrosine recombinase XerC (310 aa).

One can recognise a Core-binding (CB) domain in the interval 11-97 (NSLQKPLSRF…SLRSFFDFLV (87 aa)). Residues 118–298 (PLPKNLDVDE…DFQHLAQAYD (181 aa)) form the Tyr recombinase domain. Catalysis depends on residues R157, K181, H250, R253, and H276. Y285 functions as the O-(3'-phospho-DNA)-tyrosine intermediate in the catalytic mechanism.

This sequence belongs to the 'phage' integrase family. XerC subfamily. As to quaternary structure, forms a cyclic heterotetrameric complex composed of two molecules of XerC and two molecules of XerD.

Its subcellular location is the cytoplasm. Site-specific tyrosine recombinase, which acts by catalyzing the cutting and rejoining of the recombining DNA molecules. The XerC-XerD complex is essential to convert dimers of the bacterial chromosome into monomers to permit their segregation at cell division. It also contributes to the segregational stability of plasmids. The sequence is that of Tyrosine recombinase XerC from Vibrio atlanticus (strain LGP32) (Vibrio splendidus (strain Mel32)).